The sequence spans 610 residues: Probable methyltransferase PMT22 (610 aa).

Topologically, residues 1 to 10 are cytoplasmic; the sequence is MIKNIFQSRK. A helical; Signal-anchor for type II membrane protein membrane pass occupies residues 11-31; it reads LSGLCVLSILLVSVTILLLTN. The Lumenal portion of the chain corresponds to 32-610; that stretch reads DTIDLFPYLS…LVGLKSSWRP (579 aa). Over residues 56–69 the composition is skewed to low complexity; that stretch reads STPISSPTNDSSPP. Residues 56 to 81 form a disordered region; sequence STPISSPTNDSSPPLESPVNQTRVDD. N-linked (GlcNAc...) asparagine glycans are attached at residues asparagine 64, asparagine 75, asparagine 100, asparagine 400, asparagine 469, and asparagine 546.

It belongs to the methyltransferase superfamily.

The protein resides in the endoplasmic reticulum membrane. The protein is Probable methyltransferase PMT22 of Arabidopsis thaliana (Mouse-ear cress).